The sequence spans 173 residues: Large ribosomal subunit protein uL10 (173 aa).

This sequence belongs to the universal ribosomal protein uL10 family. Part of the ribosomal stalk of the 50S ribosomal subunit. The N-terminus interacts with L11 and the large rRNA to form the base of the stalk. The C-terminus forms an elongated spine to which L12 dimers bind in a sequential fashion forming a multimeric L10(L12)X complex.

Functionally, forms part of the ribosomal stalk, playing a central role in the interaction of the ribosome with GTP-bound translation factors. This is Large ribosomal subunit protein uL10 from Bifidobacterium animalis subsp. lactis (strain AD011).